Reading from the N-terminus, the 592-residue chain is MSNSVKGEIVKIAGPVVEAVGCEGAKMYEVFRVGDEGLIGEVINIESDRATIQVYEETTGLQPGEPVKGTGELLSVELGPGLLTQIFDGIQRPLPEIRKEVGDFVERGILVSALDRKKKWEFTPKVKEGEKVEEGDVLGTVPETEFIEHKIMVPPGVSGEVIEIAADGEYTVEDTIAVIEDEEGEEHEVTMMQEWPVRKPRPYKRKLDPEEPLITGQRVIDTFFPVAKGGTAAIPGPFGSGKTVTQQQLAKWADAQVVVYIGCGERGNEMTEVLEDFPELEDPRTGRPLMERTILVANTSNMPVAAREACIYTGITMAEYYRDMGYDVALMADSTSRWAEALREISGRLEEMPGEEGYPAYLASRLAEFYERAGRVVCLGSDDRVGSVTVVGAVSPPGGDFSEPVTQNTLRIVKVFWALDSKLADRRHFPAINWLQSYSLYLDDVEKWWHEEIGGDWRELRDEAMEILQRESELEEIVQLVGPDALPESERLILEVARMIREDFLQQNAFHEVDTYCPPEKQYEMLKTILHFKERAEEAVDKGVPVDEILKLDVIDDIARMKVIPNEEAKEKIQEIRKKIDEQFEELIEEAS.

236–243 (GPFGSGKT) is an ATP binding site.

This sequence belongs to the ATPase alpha/beta chains family. In terms of assembly, has multiple subunits with at least A(3), B(3), C, D, E, F, H, I and proteolipid K(x).

The protein resides in the cell membrane. The catalysed reaction is ATP + H2O + 4 H(+)(in) = ADP + phosphate + 5 H(+)(out). Component of the A-type ATP synthase that produces ATP from ADP in the presence of a proton gradient across the membrane. The A chain is the catalytic subunit. This chain is A-type ATP synthase subunit A, found in Methanopyrus kandleri (strain AV19 / DSM 6324 / JCM 9639 / NBRC 100938).